The primary structure comprises 384 residues: Lipid-A-disaccharide synthase (384 aa).

It belongs to the LpxB family.

It catalyses the reaction 2-N,3-O-bis[(3R)-3-hydroxytetradecanoyl]-alpha-D-glucosaminyl 1-phosphate + UDP-2-N,3-O-bis[(3R)-3-hydroxytetradecanoyl]-alpha-D-glucosamine = lipid A disaccharide (E. coli) + UDP + H(+). It carries out the reaction a lipid X + a UDP-2-N,3-O-bis[(3R)-3-hydroxyacyl]-alpha-D-glucosamine = a lipid A disaccharide + UDP + H(+). Its pathway is glycolipid biosynthesis; lipid IV(A) biosynthesis; lipid IV(A) from (3R)-3-hydroxytetradecanoyl-[acyl-carrier-protein] and UDP-N-acetyl-alpha-D-glucosamine: step 5/6. Condensation of UDP-2,3-diacylglucosamine and 2,3-diacylglucosamine-1-phosphate to form lipid A disaccharide, a precursor of lipid A, a phosphorylated glycolipid that anchors the lipopolysaccharide to the outer membrane of the cell. In Blochmanniella floridana, this protein is Lipid-A-disaccharide synthase.